The following is a 366-amino-acid chain: Flagellar P-ring protein (366 aa).

The signal sequence occupies residues methionine 1 to serine 27.

It belongs to the FlgI family. In terms of assembly, the basal body constitutes a major portion of the flagellar organelle and consists of four rings (L,P,S, and M) mounted on a central rod.

It is found in the periplasm. It localises to the bacterial flagellum basal body. In terms of biological role, assembles around the rod to form the L-ring and probably protects the motor/basal body from shearing forces during rotation. This is Flagellar P-ring protein from Leptospira interrogans serogroup Icterohaemorrhagiae serovar copenhageni (strain Fiocruz L1-130).